The chain runs to 551 residues: Glucans biosynthesis protein D (551 aa).

Positions 1 to 32 (MNRRRFLQGSLAMAALSGTTGLSTLFSRAAFA) form a signal peptide, tat-type signal.

Belongs to the OpgD/OpgG family. Post-translationally, predicted to be exported by the Tat system. The position of the signal peptide cleavage has not been experimentally proven.

The protein resides in the periplasm. Its pathway is glycan metabolism; osmoregulated periplasmic glucan (OPG) biosynthesis. Functionally, probably involved in the control of the structural glucose backbone of osmoregulated periplasmic glucans (OPGs). This Enterobacter sp. (strain 638) protein is Glucans biosynthesis protein D.